The sequence spans 277 residues: Phosphonoacetaldehyde hydrolase-like protein (277 aa).

Belongs to the HAD-like hydrolase superfamily. PhnX family.

The polypeptide is Phosphonoacetaldehyde hydrolase-like protein (phnX2) (Syntrophobacter fumaroxidans (strain DSM 10017 / MPOB)).